The chain runs to 76 residues: Acyl carrier protein (76 aa).

Residues 1 to 76 enclose the Carrier domain; the sequence is MAIFDDIKEV…DVVRYIETNK (76 aa). Position 36 is an O-(pantetheine 4'-phosphoryl)serine (serine 36).

It belongs to the acyl carrier protein (ACP) family. Post-translationally, 4'-phosphopantetheine is transferred from CoA to a specific serine of apo-ACP by AcpS. This modification is essential for activity because fatty acids are bound in thioester linkage to the sulfhydryl of the prosthetic group.

It is found in the cytoplasm. It participates in lipid metabolism; fatty acid biosynthesis. Carrier of the growing fatty acid chain in fatty acid biosynthesis. This Wolinella succinogenes (strain ATCC 29543 / DSM 1740 / CCUG 13145 / JCM 31913 / LMG 7466 / NCTC 11488 / FDC 602W) (Vibrio succinogenes) protein is Acyl carrier protein.